We begin with the raw amino-acid sequence, 580 residues long: MSQVQVQVQNPSAALSGSQILSKNQSLLSQPLMSIPSTTSSLPSENAGRPIQNSALPSASLTPTSAAAESITPTVELNALCMKLGKKPMYKPVDPYSRMQSTYNYNMRGGAYPPRYFYPFPVPPLLYQVELSVGGQQFNGKGKTRQAAKHDAAAKALRTLQSEPLPERPEGRRPGEQVNGRESEEENLNKSEISQVFEIALKRNLPVNFEVARESGPPHMKSFVTRVSVGEFVGEGEGKSKKISKKNAAIAVLEELKKLPPLPTFERVKPRIKKKTKSIVRLQGSTDCSQGMNPISRLAQIQQAKKEKEPEYLLLTERGLPRRREFVMQVKVGNHTAEGTGTNKKVAKRNAAENMLEILGFKVPQAQPTKPALKSEEKTPIKKPGDGRKVTFFEPGSGDENGTSNKEDEFRLPYLSHQQLPAGILPMVPEVAQAVGVSQGHHTKDFTRVAPNPAKATVTAMIARELLYGGTSPTAETILKNNISSGHVPHGPLTRPSEQLDYLSRVQGFQVEYKDFPKNNKNEFVSLINCSSQPPLISHGIGKDVESCHDMAALNILKLLSELDQPSTEMPRTGNGPMSV.

The residue at position 2 (Ser-2) is an N-acetylserine. Residues 34–44 (SIPSTTSSLPS) are compositionally biased toward polar residues. Residues 34–59 (SIPSTTSSLPSENAGRPIQNSALPSA) are disordered. The DRBM 1 domain maps to 72–162 (TPTVELNALC…AAKALRTLQS (91 aa)). Arg-108 carries the post-translational modification Asymmetric dimethylarginine. Arg-115 is modified (asymmetric dimethylarginine; alternate). The residue at position 115 (Arg-115) is an Omega-N-methylarginine; alternate. A disordered region spans residues 158-189 (RTLQSEPLPERPEGRRPGEQVNGRESEEENLN). A compositionally biased stretch (basic and acidic residues) spans 165–182 (LPERPEGRRPGEQVNGRE). Ser-183 is modified (phosphoserine). The DRBM 2 domain occupies 191 to 258 (SEISQVFEIA…AIAVLEELKK (68 aa)). Ser-285 is modified (phosphoserine). The DRBM 3 domain maps to 293–361 (NPISRLAQIQ…AENMLEILGF (69 aa)). A disordered region spans residues 367-404 (QPTKPALKSEEKTPIKKPGDGRKVTFFEPGSGDENGTS). Residues 373 to 391 (LKSEEKTPIKKPGDGRKVT) show a composition bias toward basic and acidic residues. Ser-397 carries the post-translational modification Phosphoserine.

Binds tubulin. Binds with low affinity single-stranded RNA or DNA homopolymers. Interacts with CASC3 in an RNA-dependent manner. Identified in a mRNP complex, at least composed of DHX9, DDX3X, ELAVL1, HNRNPU, IGF2BP1, ILF3, PABPC1, PCBP2, PTBP2, STAU1, STAU2, SYNCRIP and YBX1. Interacts with the influenza virus nonstructural protein NS1.

The protein localises to the cytoplasm. It is found in the rough endoplasmic reticulum. Functionally, binds double-stranded RNA (regardless of the sequence) and tubulin. May play a role in specific positioning of mRNAs at given sites in the cell by cross-linking cytoskeletal and RNA components, and in stimulating their translation at the site. The chain is Double-stranded RNA-binding protein Staufen homolog 1 (STAU1) from Ailuropoda melanoleuca (Giant panda).